The following is a 418-amino-acid chain: AP-3 complex subunit mu-1 (418 aa).

The region spanning 176 to 417 (NNEAYFDVIE…ITKAGKFQVR (242 aa)) is the MHD domain.

The protein belongs to the adaptor complexes medium subunit family. The AP-3 complex associates with the BLOC-1 complex.

Its subcellular location is the golgi apparatus. It is found in the cytoplasmic vesicle membrane. Part of the AP-3 complex, an adaptor-related complex which is not clathrin-associated. The complex is associated with the Golgi region as well as more peripheral structures. It facilitates the budding of vesicles from the Golgi membrane and may be directly involved in trafficking to lysosomes. In concert with the BLOC-1 complex, AP-3 is required to target cargos into vesicles assembled at cell bodies for delivery into neurites and nerve terminals. This chain is AP-3 complex subunit mu-1 (AP3M1), found in Gallus gallus (Chicken).